A 302-amino-acid chain; its full sequence is Glutaminase (302 aa).

The substrate site is built by Ser61, Asn111, Glu155, Asn162, Tyr186, Tyr238, and Val256.

It belongs to the glutaminase family. In terms of assembly, homotetramer.

It catalyses the reaction L-glutamine + H2O = L-glutamate + NH4(+). This chain is Glutaminase, found in Stutzerimonas stutzeri (strain A1501) (Pseudomonas stutzeri).